A 465-amino-acid polypeptide reads, in one-letter code: Adenosylhomocysteinase (465 aa).

Substrate-binding residues include Thr56, Asp131, and Glu191. 192–194 (TTT) provides a ligand contact to NAD(+). Residues Lys221 and Asp225 each coordinate substrate. NAD(+) contacts are provided by residues Asn226, 255–260 (GYGNVG), Glu278, Asn313, 334–336 (IGH), and Asn379.

Belongs to the adenosylhomocysteinase family. NAD(+) is required as a cofactor.

Its subcellular location is the cytoplasm. It carries out the reaction S-adenosyl-L-homocysteine + H2O = L-homocysteine + adenosine. Its pathway is amino-acid biosynthesis; L-homocysteine biosynthesis; L-homocysteine from S-adenosyl-L-homocysteine: step 1/1. Functionally, may play a key role in the regulation of the intracellular concentration of adenosylhomocysteine. In Bartonella quintana (strain Toulouse) (Rochalimaea quintana), this protein is Adenosylhomocysteinase.